Here is a 759-residue protein sequence, read N- to C-terminus: Nucleolar RNA helicase 2-A (759 aa).

The tract at residues 1 to 154 (MPVKVYAEEM…KKRKTDTTEI (154 aa)) is disordered. The segment covering 77-86 (ETAEECDGEQ) has biased composition (acidic residues). Residues 179–207 (GDFSKFPLSKETIKNLQAKGVSYLFPIQS) carry the Q motif motif. The Helicase ATP-binding domain maps to 210–389 (FHTAYSGKDV…KKYMRKQFEK (180 aa)). 223–230 (ARTGTGKT) contacts ATP. The short motif at 332 to 335 (DEVD) is the DEAD box element. The 145-residue stretch at 422 to 566 (DLVQVYSGSH…VGVPSLLNVA (145 aa)) folds into the Helicase C-terminal domain. A disordered region spans residues 709-759 (QESERNFDGPRNRGFGGRGRRPFDRRNNSRNSNRGGGGRGRNRNGGFRRGR). Residues 710-719 (ESERNFDGPR) show a composition bias toward basic and acidic residues. The segment covering 748–759 (GRNRNGGFRRGR) has biased composition (basic residues).

Belongs to the DEAD box helicase family. DDX21/DDX50 subfamily. Widely expressed. Expressed at higher level in stomach. Expressed at higher level compared to ddx21-b.

It localises to the nucleus. The protein resides in the nucleolus. The protein localises to the nucleoplasm. It is found in the cytoplasm. Its subcellular location is the cytosol. It localises to the mitochondrion. The enzyme catalyses ATP + H2O = ADP + phosphate + H(+). RNA helicase that acts as a sensor of the transcriptional status of both RNA polymerase (Pol) I and II: promotes ribosomal RNA (rRNA) processing and transcription from polymerase II (Pol II). Binds various RNAs, such as rRNAs, snoRNAs, 7SK and, at lower extent, mRNAs. In the nucleolus, localizes to rDNA locus, where it directly binds rRNAs and snoRNAs, and promotes rRNA transcription, processing and modification. Required for rRNA 2'-O-methylation, possibly by promoting the recruitment of late-acting snoRNAs SNORD56 and SNORD58 with pre-ribosomal complexes. In the nucleoplasm, binds 7SK RNA and is recruited to the promoters of Pol II-transcribed genes: acts by facilitating the release of P-TEFb from inhibitory 7SK snRNP in a manner that is dependent on its helicase activity, thereby promoting transcription of its target genes. Required to prevent R-loop-associated DNA damage and transcription-associated genomic instability. In Xenopus laevis (African clawed frog), this protein is Nucleolar RNA helicase 2-A (ddx21-a).